Here is an 89-residue protein sequence, read N- to C-terminus: Small ribosomal subunit protein uS15c (89 aa).

It belongs to the universal ribosomal protein uS15 family. Part of the 30S ribosomal subunit.

The protein resides in the plastid. Its subcellular location is the chloroplast. This is Small ribosomal subunit protein uS15c (rps15) from Chloranthus spicatus (Chulantree).